We begin with the raw amino-acid sequence, 286 residues long: Transcription factor MafA (286 aa).

2 positions are modified to phosphoserine: Ser-14 and Ser-49. The span at 51 to 85 shows a compositional bias: low complexity; it reads SSTPLSTPCSSVPSSPSFCAPSPGGQPSAGPTAAP. The tract at residues 51–87 is disordered; the sequence is SSTPLSTPCSSVPSSPSFCAPSPGGQPSAGPTAAPLG. 2 positions are modified to phosphothreonine: Thr-53 and Thr-57. Phosphoserine is present on residues Ser-61 and Ser-65. The residue at position 113 (Thr-113) is a Phosphothreonine. The tract at residues 126 to 167 is disordered; it reads HHHHHHHQSYESFRPQPFGGEELPPAAHHHNAHHHHHHHHLR. Residues 152-166 are compositionally biased toward basic residues; it reads AHHHNAHHHHHHHHL. The interval 199-224 is basic motif; it reads RLKQNRRTLKNRGYAQSCRYKRVQQR. One can recognise a bZIP domain in the interval 199–262; the sequence is RLKQNRRTLK…DLYKEKYEKL (64 aa). The leucine-zipper stretch occupies residues 227 to 248; that stretch reads LENEKCQLQSQVEQLKQEVSRL. The disordered stretch occupies residues 265–286; sequence RGFPREPSPPAAPKTTAADFFM. Ser-272 bears the Phosphoserine mark. A compositionally biased stretch (low complexity) spans 277-286; it reads PKTTAADFFM.

Belongs to the bZIP family. Maf subfamily. In terms of assembly, forms homodimers or heterodimers. May interact (via leucine-zipper domain) with MAFB. May interact with FOS and JUN. Interacts with PCAF; this interaction impairs MAFA ubiquitination.

It is found in the nucleus. In terms of biological role, transcription factor involved in transcription regulation during lens development, including that of crystallin and filensin/BFSP1 genes. Binds to CRE-type MARE 5'-TGCTGACGTCAGCA-3' and TRE-type MARE 5'-TGCTGACTCAGCA-3' DNA sequences. In Gallus gallus (Chicken), this protein is Transcription factor MafA (MAFA).